The primary structure comprises 319 residues: Ficolin-2 (319 aa).

The N-terminal stretch at Met-1–Ala-22 is a signal peptide. The Collagen-like domain maps to Gly-45–Ser-101. The tract at residues Leu-53–Thr-106 is disordered. The segment covering Lys-83–Asp-97 has biased composition (basic and acidic residues). Positions Gln-102–Ile-319 constitute a Fibrinogen C-terminal domain. 2 cysteine pairs are disulfide-bonded: Cys-104/Cys-132 and Cys-111/Cys-139. Positions 255, 257, and 261 each coordinate Ca(2+). Cys-263 and Cys-276 form a disulfide bridge. Residue Asn-306 is glycosylated (N-linked (GlcNAc...) asparagine).

Belongs to the ficolin lectin family. In terms of assembly, homotrimer. Interacts with elastin. Interacts with MASP1 and MASP2.

The protein resides in the secreted. Its function is as follows. May function in innate immunity through activation of the lectin complement pathway. Calcium-dependent and GlcNAc-binding lectin. In Rattus norvegicus (Rat), this protein is Ficolin-2 (Fcn2).